The sequence spans 164 residues: uncharacterized protein (164 aa).

A Phosphoserine modification is found at Ser-117.

This is an uncharacterized protein from Bacillus subtilis (strain 168).